The chain runs to 234 residues: Protein-toxin resistance protein KTD1 (234 aa).

At 1–47 (MQTPSENTDVKMDTLDEPSAHLIEENVALPEDTFSSHLSYVLYEIAH) the chain is on the cytoplasmic side. The helical transmembrane segment at 48 to 68 (CKPIMFMIIIIVSLISLIVLF) threads the bilayer. The segment at 68–75 (FHDNDGCT) is required for resistance to killer toxin K28, a protein-toxin encoded by the M28 virus. The Extracellular segment spans residues 69 to 76 (HDNDGCTV). Residues 77–97 (ILVMSLIVASMALMVVAAFTF) form a helical membrane-spanning segment. Topologically, residues 98-234 (GKAITEQEFM…RKQYPDADLP (137 aa)) are cytoplasmic. The interval 147-234 (FYSGKKCHEF…RKQYPDADLP (88 aa)) is required for resistance to killer toxin K28, a protein-toxin encoded by the M28 virus. A disordered region spans residues 168–187 (SHSDSSSNSAEDTQSPVSAG). Over residues 177–187 (AEDTQSPVSAG) the composition is skewed to polar residues. A Glycyl lysine isopeptide (Lys-Gly) (interchain with G-Cter in ubiquitin) cross-link involves residue K217.

It belongs to the DUP/COS family.

It is found in the vacuole membrane. Its subcellular location is the golgi apparatus. The protein resides in the trans-Golgi network membrane. It localises to the endosome membrane. Its function is as follows. Confers resistance to killer toxin K28, a protein-toxin encoded by the M28 virus that uses S.cerevisiae as a host. Probably acts against K28 after endocytosis of the protein-toxin. This is Protein-toxin resistance protein KTD1 from Saccharomyces cerevisiae (strain ATCC 204508 / S288c) (Baker's yeast).